Here is a 209-residue protein sequence, read N- to C-terminus: Isopentenyl-diphosphate Delta-isomerase (209 aa).

Mn(2+) contacts are provided by His31 and His38. Residues 36–171 form the Nudix hydrolase domain; the sequence is PLHLAFSVYI…RLLVSPWCRA (136 aa). Cys73 is a catalytic residue. Residue Cys73 participates in Mg(2+) binding. His75 is a Mn(2+) binding site. Glu93 contributes to the Mg(2+) binding site. Positions 120 and 122 each coordinate Mn(2+). Glu122 is an active-site residue.

Belongs to the IPP isomerase type 1 family. Mg(2+) serves as cofactor. Requires Mn(2+) as cofactor.

Its subcellular location is the cytoplasm. The enzyme catalyses isopentenyl diphosphate = dimethylallyl diphosphate. Its pathway is isoprenoid biosynthesis; dimethylallyl diphosphate biosynthesis; dimethylallyl diphosphate from isopentenyl diphosphate: step 1/1. Its function is as follows. Catalyzes the 1,3-allylic rearrangement of the homoallylic substrate isopentenyl (IPP) to its highly electrophilic allylic isomer, dimethylallyl diphosphate (DMAPP). This Rhizobium rhizogenes (Agrobacterium rhizogenes) protein is Isopentenyl-diphosphate Delta-isomerase.